Here is a 158-residue protein sequence, read N- to C-terminus: 14-3-3 protein gamma (158 aa).

Residues 1 to 158 (AAAMKNVTEL…TSDQQDDDGG (158 aa)) are interaction with SPATA18/MIEAP. The residue at position 48 (S48) is a Phosphoserine. Residue Y60 is modified to Phosphotyrosine. T72 carries the phosphothreonine modification. Phosphoserine is present on S130. At T149 the chain carries Phosphothreonine. S150 carries the post-translational modification Phosphoserine.

The protein belongs to the 14-3-3 family. In terms of assembly, homodimer. Part of a complex that contains DSG3, PKP1, YAP1 and YWHAG; the complex is required for localization of DSG3 and YAP1 to the cell membrane in keratinocytes. Interacts with SAMSN1. Interacts with RAF1, SSH1 and CRTC2/TORC2. Interacts with ABL1 (phosphorylated form); the interaction retains it in the cytoplasm. Interacts with GAB2. Interacts with MDM4 (phosphorylated); negatively regulates MDM4 activity toward TP53. Interacts with PKA-phosphorylated AANAT and SIRT2. Interacts with the 'Thr-369' phosphorylated form of DAPK2. Interacts with PI4KB, TBC1D22A and TBC1D22B. Interacts with SLITRK1. Interacts with LRRK2; this interaction is dependent on LRRK2 phosphorylation. Interacts with MARK2 and MARK3. Interacts with MEFV. Interacts with ENDOG, TSC2 and PIK3C3; interaction with ENDOG weakens its interaction with TSC2 and PIK3C3. Interacts with (phosphorylated) WDR24. Interacts with BEST1; this interaction promotes L-glutamate channel activity leading to the positive regulation of NMDA glutamate receptor activity through the L-glutamate secretion. Interacts with PKP1 (when phosphorylated); the interaction results in translocation of PKP1 to the cytoplasm and loss of intercellular adhesion in keratinocytes. Interacts with SPATA18/MIEAP; a protein that also plays a role in MALM. In terms of processing, phosphorylated by various PKC isozymes.

The protein localises to the cytoplasm. It localises to the cytosol. It is found in the mitochondrion matrix. Functionally, adapter protein implicated in the regulation of a large spectrum of both general and specialized signaling pathways. Binds to a large number of partners, usually by recognition of a phosphoserine or phosphothreonine motif. Binding generally results in the modulation of the activity of the binding partner. Promotes inactivation of WDR24 component of the GATOR2 complex by binding to phosphorylated WDR24. Participates in the positive regulation of NMDA glutamate receptor activity by promoting the L-glutamate secretion through interaction with BEST1. Reduces keratinocyte intercellular adhesion, via interacting with PKP1 and sequestering it in the cytoplasm, thereby reducing its incorporation into desmosomes. Plays a role in mitochondrial protein catabolic process (also named MALM) that promotes the degradation of damaged proteins inside mitochondria. This Ovis aries (Sheep) protein is 14-3-3 protein gamma.